Reading from the N-terminus, the 146-residue chain is Hut operon positive regulatory protein (146 aa).

It belongs to the HutP family. Homohexamer.

Antiterminator that binds to cis-acting regulatory sequences on the mRNA in the presence of histidine, thereby suppressing transcription termination and activating the hut operon for histidine utilization. This Bacillus cereus (strain ZK / E33L) protein is Hut operon positive regulatory protein.